Here is a 666-residue protein sequence, read N- to C-terminus: Calpain-10 (666 aa).

One can recognise a Calpain catalytic domain in the interval 13–321 (LFRDAAFPAS…FDEVTIGYPV (309 aa)). Catalysis depends on residues cysteine 73, histidine 238, and asparagine 263. Domain III regions lie at residues 322 to 488 (TEAG…ISLS) and 507 to 648 (EWET…IHSQ).

The protein belongs to the peptidase C2 family. In terms of tissue distribution, ubiquitous.

It is found in the cytoplasm. Its subcellular location is the nucleus. Calcium-regulated non-lysosomal thiol-protease which catalyzes limited proteolysis of substrates involved in cytoskeletal remodeling and signal transduction. May play a role in insulin-stimulated glucose uptake. The sequence is that of Calpain-10 (Capn10) from Rattus norvegicus (Rat).